The primary structure comprises 142 residues: Domesticated amidase effector 2 (142 aa).

An N-terminal signal peptide occupies residues 1-35 (MKLFLISAALVVLGLAAVADAIGCSDPSPFQGRWV). Active-site residues include Cys-43 and His-94.

The protein belongs to the cell wall amidase Dae2/Tae2-like family. In terms of processing, may be post-translationally modified, since the saliva wild-type protein is slightly heavier than the recombinant one. In terms of tissue distribution, detected in salivary glands and in the gut (at protein level).

Its subcellular location is the secreted. In terms of biological role, tick gut and saliva antibacterial peptide that directly antagonizes host skin commensals which enter the ticks during feeding. Acts as a cell wall hydrolase that cleaves the bond between gamma-D-glutamate-meso-diaminopimelate of a peptide stem and D-alanine of another peptide stem in peptidoglycans. In vitro, degrades peptidoglycans from both Gram-negative and Gram-positive bacteria. Is not able to traverse the protective outer membrane of Gram-negative bacteria. Is not able to kill Borrelia burgdorferi, one of the Lyme disease-causing bacteria. The chain is Domesticated amidase effector 2 from Ixodes scapularis (Black-legged tick).